The chain runs to 181 residues: Der GTPase-activating protein YihI (181 aa).

Residues methionine 1 to isoleucine 73 form a disordered region. The span at asparagine 22–glutamate 32 shows a compositional bias: basic and acidic residues. The segment covering isoleucine 33–leucine 42 has biased composition (basic residues). Basic and acidic residues predominate over residues glutamine 55–isoleucine 67.

The protein belongs to the YihI family. In terms of assembly, interacts with Der.

A GTPase-activating protein (GAP) that modifies Der/EngA GTPase function. May play a role in ribosome biogenesis. This chain is Der GTPase-activating protein YihI, found in Aliivibrio fischeri (strain ATCC 700601 / ES114) (Vibrio fischeri).